Reading from the N-terminus, the 327-residue chain is Glutamyl endopeptidase (327 aa).

An N-terminal signal peptide occupies residues 1 to 29 (MKGKFLKVSSLFVATLTTATLVSSPAANA). The propeptide occupies 30–68 (LSSKAMDNHPQQSQSSKQQTPKIQKGGNLKPLEQREHAN). Residues 33-61 (KAMDNHPQQSQSSKQQTPKIQKGGNLKPL) are disordered. Over residues 40–54 (QQSQSSKQQTPKIQK) the composition is skewed to low complexity. Catalysis depends on charge relay system residues His119, Asp161, and Ser237. The interval 283 to 327 (FANDDQPNNPDNPDNPNNPDNPNNPNNPDNPDNGDNNNSDNPDAA) is disordered. Low complexity predominate over residues 286–327 (DDQPNNPDNPDNPNNPDNPNNPNNPDNPDNGDNNNSDNPDAA). A run of 9 repeats spans residues 289-291 (PNN), 292-294 (PDN), 295-297 (PDN), 298-300 (PNN), 301-303 (PDN), 304-306 (PNN), 307-309 (PNN), 310-312 (PDN), and 313-315 (PDN). The tract at residues 289–315 (PNNPDNPDNPNNPDNPNNPNNPDNPDN) is 9 X 3 AA repeats of P-[DN]-N.

Belongs to the peptidase S1B family. Proteolytically cleaved by aureolysin (aur). This cleavage leads to the activation of SspA.

It localises to the secreted. The catalysed reaction is Preferential cleavage: Glu-|-Xaa, Asp-|-Xaa.. In terms of biological role, preferentially cleaves peptide bonds on the carboxyl-terminal side of aspartate and glutamate. Along with other extracellular proteases it is involved in colonization and infection of human tissues. Required for proteolytic maturation of thiol protease SspB and inactivation of SspC, an inhibitor of SspB. It is the most important protease for degradation of fibronectin-binding protein (FnBP) and surface protein A, which are involved in adherence to host cells. May also protect bacteria against host defense mechanism by cleaving the immunoglobulin classes IgG, IgA and IgM. May be involved in the stability of secreted lipases. This is Glutamyl endopeptidase (sspA) from Staphylococcus aureus (strain MW2).